Here is a 193-residue protein sequence, read N- to C-terminus: Tetrahydromethanopterin S-methyltransferase subunit A 2 (193 aa).

Over M1–D38 the chain is Cytoplasmic. A helical membrane pass occupies residues I39–I58. Over E59 to A193 the chain is Extracellular. H84 is a binding site for 5-hydroxybenzimidazolylcob(I)amide. The disordered stretch occupies residues S174–A193.

This sequence belongs to the MtrA family. The complex is composed of 8 subunits; MtrA, MtrB, MtrC, MtrD, MtrE, MtrF, MtrG and MtrH. 5-hydroxybenzimidazolylcob(I)amide serves as cofactor.

The protein localises to the cell membrane. The catalysed reaction is 5-methyl-5,6,7,8-tetrahydromethanopterin + coenzyme M + 2 Na(+)(in) = 5,6,7,8-tetrahydromethanopterin + methyl-coenzyme M + 2 Na(+)(out). The protein operates within one-carbon metabolism; methanogenesis from CO(2); methyl-coenzyme M from 5,10-methylene-5,6,7,8-tetrahydromethanopterin: step 2/2. In terms of biological role, part of a complex that catalyzes the formation of methyl-coenzyme M and tetrahydromethanopterin from coenzyme M and methyl-tetrahydromethanopterin. This is an energy-conserving, sodium-ion translocating step. This Methanobrevibacter ruminantium (strain ATCC 35063 / DSM 1093 / JCM 13430 / OCM 146 / M1) (Methanobacterium ruminantium) protein is Tetrahydromethanopterin S-methyltransferase subunit A 2.